A 20-amino-acid chain; its full sequence is 2-oxo-acid reductase (20 aa).

This sequence belongs to the AOR/FOR family. In terms of assembly, forms various types of homooligomers. It depends on [4Fe-4S] cluster as a cofactor. Mo-molybdopterin is required as a cofactor.

It is found in the cell membrane. The enzyme catalyses a (2R)-2-hydroxycarboxylate + A = a 2-oxocarboxylate + AH2. Its activity is regulated as follows. Is inhibited by cyanide. Is sensitive to oxygen. In terms of biological role, oxidoreductase with an extremely broad substrate specificity that can reduce reversibly 2-oxocarboxylates to (2R)-hydroxycarboxylates. This is 2-oxo-acid reductase from Proteus hauseri.